The primary structure comprises 350 residues: Probable nicotinate-nucleotide adenylyltransferase/Ap4A hydrolase (350 aa).

The tract at residues 1 to 187 is naMN adenylyltransferase; that stretch reads MKQKIIIFGG…YINTNHLYLI (187 aa). Residues 196–350 are ap4A hydrolase; the sequence is DKRFQHCLRV…LKYVQNLVKD (155 aa). An HD domain is found at 198-310; sequence RFQHCLRVGK…VYLADKLEPN (113 aa). Residue His-201 coordinates ADP. Fe cation-binding residues include His-201, His-230, and Asp-231. ADP is bound by residues 231 to 234, His-261, 287 to 288, Asp-305, and Arg-311; these read DLAK and HT. Position 305 (Asp-305) interacts with Fe cation.

In the N-terminal section; belongs to the NadD family. This sequence in the C-terminal section; belongs to the Ap4A hydrolase YqeK family.

The catalysed reaction is nicotinate beta-D-ribonucleotide + ATP + H(+) = deamido-NAD(+) + diphosphate. It catalyses the reaction P(1),P(4)-bis(5'-adenosyl) tetraphosphate + H2O = 2 ADP + 2 H(+). It functions in the pathway cofactor biosynthesis; NAD(+) biosynthesis; deamido-NAD(+) from nicotinate D-ribonucleotide: step 1/1. Its function is as follows. Catalyzes the reversible adenylation of nicotinate mononucleotide (NaMN) to nicotinic acid adenine dinucleotide (NaAD). Hydrolyzes diadenosine 5',5'''-P1,P4-tetraphosphate (Ap4A) to yield ADP. In Mycoplasma genitalium (strain ATCC 33530 / DSM 19775 / NCTC 10195 / G37) (Mycoplasmoides genitalium), this protein is Probable nicotinate-nucleotide adenylyltransferase/Ap4A hydrolase.